Here is a 509-residue protein sequence, read N- to C-terminus: CDK5RAP3 protein homolog (509 aa).

This sequence belongs to the CDK5RAP3 family.

It localises to the nucleus. The protein localises to the cytoplasm. Its function is as follows. Substrate adapter of E3 ligase complexes mediating ufmylation, the covalent attachment of the ubiquitin-like modifier UFM1 to substrate proteins, and which is involved in various processes, such as ribosome recycling and reticulophagy (also called ER-phagy). This is CDK5RAP3 protein homolog from Drosophila melanogaster (Fruit fly).